Consider the following 662-residue polypeptide: Probable quinol oxidase subunit 1 (662 aa).

2 helical membrane passes run 14–34 and 56–76; these read WMIISAQIAAPFLVIGLIAVI and IGIMYLISAVLMFVRGGIDAL. Residue H102 participates in Fe(II)-heme a binding. 8 helical membrane passes run 103–123, 140–160, 187–207, 228–248, 273–293, 311–331, 336–356, and 376–396; these read GVIMIIFMAMPFIFGLWNVVI, VSFWLFFAGMILFNLSFIVGG, IAIQISGIGSLMTGINFFVTI, FITTLIVILAFPVFTVALALM, FFWVWGHPEVYIVILPAFGMY, MIWATAGIAFLSFLVWVHHFF, GALINSFFSISTMLIGVPTGV, and MLFSLAFIPNFLLGGVTGVML. Cu cation is bound by residues H279, Y283, H328, and H329. A cross-link (1'-histidyl-3'-tyrosine (His-Tyr)) is located at residues 279–283; the sequence is HPEVY. H414 contacts heme a3. A run of 5 helical transmembrane segments spans residues 415-435, 451-471, 492-512, 587-604, and 608-627; these read FHYTLVTGVVFACLAGLIFWY, CFWFFMIGFNVCFLPQFILGL, FISTIGAVLMAIGFLFLVASI, PVGFWMGIFMTIGGFFLI, and IVPALICLAGIFITMIWRSF. Residue H416 coordinates Fe(II)-heme a.

It belongs to the heme-copper respiratory oxidase family. It depends on Cu cation as a cofactor. Ferriheme a serves as cofactor. Requires Heme A3. as cofactor.

Its subcellular location is the cell membrane. The catalysed reaction is 2 a quinol + O2 = 2 a quinone + 2 H2O. It participates in energy metabolism; oxidative phosphorylation. In terms of biological role, catalyzes quinol oxidation with the concomitant reduction of oxygen to water. The polypeptide is Probable quinol oxidase subunit 1 (qoxB) (Staphylococcus epidermidis (strain ATCC 35984 / DSM 28319 / BCRC 17069 / CCUG 31568 / BM 3577 / RP62A)).